The following is a 176-amino-acid chain: Ribosome maturation factor RimM (176 aa).

The PRC barrel domain maps to 97–176 (DSEFYHRDLI…QILVDWDPDF (80 aa)).

Belongs to the RimM family. In terms of assembly, binds ribosomal protein uS19.

It localises to the cytoplasm. In terms of biological role, an accessory protein needed during the final step in the assembly of 30S ribosomal subunit, possibly for assembly of the head region. Essential for efficient processing of 16S rRNA. May be needed both before and after RbfA during the maturation of 16S rRNA. It has affinity for free ribosomal 30S subunits but not for 70S ribosomes. In Shewanella frigidimarina (strain NCIMB 400), this protein is Ribosome maturation factor RimM.